The following is a 136-amino-acid chain: D-ribose pyranase (136 aa).

The active-site Proton donor is the histidine 20. Residues aspartate 28, histidine 98, and 120–122 (YAN) contribute to the substrate site.

This sequence belongs to the RbsD / FucU family. RbsD subfamily. In terms of assembly, homodecamer.

The protein localises to the cytoplasm. It catalyses the reaction beta-D-ribopyranose = beta-D-ribofuranose. Its pathway is carbohydrate metabolism; D-ribose degradation; D-ribose 5-phosphate from beta-D-ribopyranose: step 1/2. Catalyzes the interconversion of beta-pyran and beta-furan forms of D-ribose. This Geobacillus kaustophilus (strain HTA426) protein is D-ribose pyranase.